The following is a 391-amino-acid chain: GTPase Obg (391 aa).

Residues 1-159 enclose the Obg domain; it reads MKFLDQAKIF…IWVWLRLKLI (159 aa). An OBG-type G domain is found at 160–327; that stretch reads ADAGLIGLPN…VLRVMATHVD (168 aa). GTP-binding positions include 166–173, 191–195, 212–215, 279–282, and 308–310; these read GLPNAGKS, FTTLH, DIPG, SKID, and SAI. S173 and T193 together coordinate Mg(2+). The disordered stretch occupies residues 352-391; it reads TGIDHGYNRPSAVVDWEDAPFDDDDDDDGDESGDKGQWTR. Acidic residues predominate over residues 366 to 382; sequence DWEDAPFDDDDDDDGDE.

It belongs to the TRAFAC class OBG-HflX-like GTPase superfamily. OBG GTPase family. As to quaternary structure, monomer. Mg(2+) serves as cofactor.

Its subcellular location is the cytoplasm. Its function is as follows. An essential GTPase which binds GTP, GDP and possibly (p)ppGpp with moderate affinity, with high nucleotide exchange rates and a fairly low GTP hydrolysis rate. Plays a role in control of the cell cycle, stress response, ribosome biogenesis and in those bacteria that undergo differentiation, in morphogenesis control. The chain is GTPase Obg from Rhodospirillum rubrum (strain ATCC 11170 / ATH 1.1.1 / DSM 467 / LMG 4362 / NCIMB 8255 / S1).